A 434-amino-acid chain; its full sequence is Histidinol dehydrogenase (434 aa).

Tyrosine 130, glutamine 188, and asparagine 211 together coordinate NAD(+). Positions 237, 259, and 262 each coordinate substrate. Zn(2+) contacts are provided by glutamine 259 and histidine 262. Residues glutamate 326 and histidine 327 each act as proton acceptor in the active site. 4 residues coordinate substrate: histidine 327, aspartate 360, glutamate 414, and histidine 419. Aspartate 360 provides a ligand contact to Zn(2+). Histidine 419 contacts Zn(2+).

Belongs to the histidinol dehydrogenase family. Homodimer. The cofactor is Zn(2+). Mn(2+) serves as cofactor.

The enzyme catalyses L-histidinol + 2 NAD(+) + H2O = L-histidine + 2 NADH + 3 H(+). The protein operates within amino-acid biosynthesis; L-histidine biosynthesis; L-histidine from 5-phospho-alpha-D-ribose 1-diphosphate: step 9/9. Activity is lost when the metal is removed through urea denaturation or chelation, and can be regained by addition of metal. In terms of biological role, catalyzes the sequential NAD-dependent oxidations of L-histidinol to L-histidinaldehyde and then to L-histidine. This Salmonella typhimurium (strain LT2 / SGSC1412 / ATCC 700720) protein is Histidinol dehydrogenase (hisD).